A 1081-amino-acid polypeptide reads, in one-letter code: FHF complex subunit HOOK-interacting protein 1A (1081 aa).

Disordered stretches follow at residues 474 to 496 (SEEQLLPETPCSPSSPSPPPPPA), 544 to 623 (PETF…DPPK), 658 to 770 (EKDT…ENEP), and 863 to 883 (EAGSSPFGVGEDTAFSSRHPV). The segment covering 486-496 (PSSPSPPPPPA) has biased composition (pro residues). The span at 553-564 (EESRENSGHPEA) shows a compositional bias: basic and acidic residues. Over residues 567 to 576 (PQQSVRTSGQ) the composition is skewed to polar residues. The segment covering 680–707 (EPLEDTSEQQEDTSEQLEDTSELQEDTA) has biased composition (acidic residues). Polar residues-rich tracts occupy residues 727 to 738 (EAQSLPTSNGPL) and 746 to 762 (ESQPSRESSDLCQNTFS).

The protein belongs to the FHIP family. As to quaternary structure, may be a component of the FTS/Hook/FHIP complex (FHF complex), composed of AKTIP/FTS, FHIP1B, and one or more members of the Hook family of proteins HOOK1, HOOK2, and HOOK3. May interact directly with AKTIP/FTS.

Its function is as follows. Probable component of the FTS/Hook/FHIP complex (FHF complex). FHF complex promotes the distribution of AP-4 complex to the perinuclear area of the cell. This is FHF complex subunit HOOK-interacting protein 1A from Mus musculus (Mouse).